The chain runs to 483 residues: UDP-N-acetylmuramate--L-alanine ligase (483 aa).

Residue 112–118 participates in ATP binding; that stretch reads GTHGKTT.

It belongs to the MurCDEF family.

The protein localises to the cytoplasm. It catalyses the reaction UDP-N-acetyl-alpha-D-muramate + L-alanine + ATP = UDP-N-acetyl-alpha-D-muramoyl-L-alanine + ADP + phosphate + H(+). Its pathway is cell wall biogenesis; peptidoglycan biosynthesis. In terms of biological role, cell wall formation. This chain is UDP-N-acetylmuramate--L-alanine ligase, found in Ralstonia pickettii (strain 12J).